The following is a 442-amino-acid chain: Transcription factor AP-2-epsilon (442 aa).

The PPxY motif motif lies at 54 to 59 (YFPPPY). S246 carries the phosphoserine; by PKA modification. The H-S-H (helix-span-helix), dimerization stretch occupies residues 287–417 (RRKAANVTLL…YLLESLKGLD (131 aa)).

Belongs to the AP-2 family. In terms of assembly, binds DNA as a dimer. Can form homodimers or heterodimers with other AP-2 family members. Expressed in skin, primary keratinocytes, immortalized keratinocytes, and HeLa cell line.

The protein resides in the nucleus. Its function is as follows. Sequence-specific DNA-binding protein that interacts with inducible viral and cellular enhancer elements to regulate transcription of selected genes. AP-2 factors bind to the consensus sequence 5'-GCCNNNGGC-3' and activate genes involved in a large spectrum of important biological functions including proper eye, face, body wall, limb and neural tube development. They also suppress a number of genes including MCAM/MUC18, C/EBP alpha and MYC. AP-2-epsilon may play a role in the development of the CNS and in cartilage differentiation. The polypeptide is Transcription factor AP-2-epsilon (Homo sapiens (Human)).